Here is a 226-residue protein sequence, read N- to C-terminus: Ribonuclease 3 (226 aa).

The region spanning 6–128 (INRLQRKLGY…LIGGVFLDSN (123 aa)) is the RNase III domain. Glu41 provides a ligand contact to Mg(2+). Residue Asp45 is part of the active site. Residues Asp114 and Glu117 each contribute to the Mg(2+) site. Glu117 is a catalytic residue. The 71-residue stretch at 155-225 (DPKTRLQEYL…AEQALKKLEL (71 aa)) folds into the DRBM domain.

Belongs to the ribonuclease III family. As to quaternary structure, homodimer. It depends on Mg(2+) as a cofactor.

It is found in the cytoplasm. The enzyme catalyses Endonucleolytic cleavage to 5'-phosphomonoester.. Digests double-stranded RNA. Involved in the processing of primary rRNA transcript to yield the immediate precursors to the large and small rRNAs (23S and 16S). Processes some mRNAs, and tRNAs when they are encoded in the rRNA operon. Processes pre-crRNA and tracrRNA of type II CRISPR loci if present in the organism. This Salmonella enteritidis PT4 (strain P125109) protein is Ribonuclease 3.